The sequence spans 584 residues: Peroxynitrite isomerase THAP4 (584 aa).

A THAP-type zinc finger spans residues M1–F85. Positions I84–A330 are disordered. The span at E89–D104 shows a compositional bias: basic residues. A compositionally biased stretch (low complexity) spans G122 to A138. A compositionally biased stretch (basic and acidic residues) spans A158–D178. Positions G190–D208 are enriched in low complexity. The HCFC1-binding motif (HBM) signature appears at L236–Y239. S240 carries the post-translational modification Phosphoserine. The segment covering E248 to E267 has biased composition (basic and acidic residues). The nitrobindin stretch occupies residues P422–P584. Heme b is bound by residues T451 and H574.

It in the C-terminal section; belongs to the nitrobindin family. In terms of assembly, homodimer. The cofactor is heme b.

It is found in the cytoplasm. Its subcellular location is the nucleus. The enzyme catalyses peroxynitrite = nitrate. It functions in the pathway nitrogen metabolism. Its function is as follows. Heme-binding protein able to scavenge peroxynitrite and to protect free L-tyrosine against peroxynitrite-mediated nitration, by acting as a peroxynitrite isomerase that converts peroxynitrite to nitrate. Therefore, this protein likely plays a role in peroxynitrite sensing and in the detoxification of reactive nitrogen and oxygen species (RNS and ROS, respectively). Is able to bind nitric oxide (NO) in vitro, but may act as a sensor of peroxynitrite levels in vivo, possibly modulating the transcriptional activity residing in the N-terminal region. The chain is Peroxynitrite isomerase THAP4 from Bos taurus (Bovine).